Here is a 355-residue protein sequence, read N- to C-terminus: 3-isopropylmalate dehydrogenase (355 aa).

Substrate-binding residues include arginine 90, arginine 100, arginine 128, and aspartate 222. Residues aspartate 222, aspartate 246, and aspartate 250 each contribute to the Mg(2+) site. 280 to 292 (GSAPDIAGKGIAN) contributes to the NAD(+) binding site.

This sequence belongs to the isocitrate and isopropylmalate dehydrogenases family. LeuB type 1 subfamily. In terms of assembly, homodimer. Mg(2+) is required as a cofactor. Mn(2+) serves as cofactor.

The protein localises to the cytoplasm. It catalyses the reaction (2R,3S)-3-isopropylmalate + NAD(+) = 4-methyl-2-oxopentanoate + CO2 + NADH. The protein operates within amino-acid biosynthesis; L-leucine biosynthesis; L-leucine from 3-methyl-2-oxobutanoate: step 3/4. In terms of biological role, catalyzes the oxidation of 3-carboxy-2-hydroxy-4-methylpentanoate (3-isopropylmalate) to 3-carboxy-4-methyl-2-oxopentanoate. The product decarboxylates to 4-methyl-2 oxopentanoate. This chain is 3-isopropylmalate dehydrogenase, found in Burkholderia lata (strain ATCC 17760 / DSM 23089 / LMG 22485 / NCIMB 9086 / R18194 / 383).